Reading from the N-terminus, the 206-residue chain is Protein GrpE (206 aa).

Belongs to the GrpE family. Homodimer.

It is found in the cytoplasm. Participates actively in the response to hyperosmotic and heat shock by preventing the aggregation of stress-denatured proteins, in association with DnaK and GrpE. It is the nucleotide exchange factor for DnaK and may function as a thermosensor. Unfolded proteins bind initially to DnaJ; upon interaction with the DnaJ-bound protein, DnaK hydrolyzes its bound ATP, resulting in the formation of a stable complex. GrpE releases ADP from DnaK; ATP binding to DnaK triggers the release of the substrate protein, thus completing the reaction cycle. Several rounds of ATP-dependent interactions between DnaJ, DnaK and GrpE are required for fully efficient folding. This Shewanella baltica (strain OS223) protein is Protein GrpE.